The following is a 134-amino-acid chain: Putative nickel-responsive regulator (134 aa).

Ni(2+)-binding residues include His78, His89, His91, and Cys97.

It belongs to the transcriptional regulatory CopG/NikR family. Ni(2+) serves as cofactor.

Functionally, transcriptional regulator. The chain is Putative nickel-responsive regulator from Chlorobaculum parvum (strain DSM 263 / NCIMB 8327) (Chlorobium vibrioforme subsp. thiosulfatophilum).